The primary structure comprises 423 residues: Glycine-rich protein 1 (423 aa).

A signal peptide spans 1-20 (MKKICLTFVFLLSLFPIYSS). 4 disordered regions span residues 28–47 (TIES…AGPA), 78–133 (DDDN…SKKN), 159–219 (KGGS…GAGA), and 236–288 (GASA…ASAG). Positions 31–42 (SGSSKSSGSSVG) are enriched in low complexity. 2 stretches are compositionally biased toward basic and acidic residues: residues 81 to 93 (NKDK…DGKT) and 102 to 111 (QNGDDVKSDN). Positions 159–172 (KGGSANNGGEGGAT) are enriched in gly residues. Positions 173-183 (SAGSAGATSGA) are enriched in low complexity. Gly residues-rich tracts occupy residues 205–219 (GAGG…GAGA) and 236–247 (GASAGAGAGGAQ). Residues 248 to 284 (GDAEAASAGSTAGSTSSGGAAASGASSGAGSSDSGQG) show a composition bias toward low complexity.

As to expression, nacreous layer of shell (at protein level).

The protein localises to the secreted. This is Glycine-rich protein 1 from Pinctada maxima (Silver-lipped pearl oyster).